Consider the following 1228-residue polypeptide: Calcium-transporting ATPase (1228 aa).

Topologically, residues 1 to 63 (MEEVIKNAHT…FELILNQFDD (63 aa)) are cytoplasmic. The helical transmembrane segment at 64 to 81 (LLVKILLLAAFISFVLTL) threads the bilayer. Over 82-92 (LDMKHKKIEIC) the chain is Extracellular. Residues 93 to 112 (DFIEPLVIVLILILNAAVGV) form a helical membrane-spanning segment. The Cytoplasmic segment spans residues 113-270 (WQECNAEKSL…IDLFGQQLSK (158 aa)). Residues 271–291 (IIFVICVTVWIINFKHFSDPI) form a helical membrane-spanning segment. The Extracellular segment spans residues 292 to 300 (HGSFLYGCL). A helical membrane pass occupies residues 301 to 321 (YYFKISVALAVAAIPEGLPAV). Residues 322–974 (ITTCLALGTR…IYNNMKAFIR (653 aa)) lie on the Cytoplasmic side of the membrane. Catalysis depends on Asp-358, which acts as the 4-aspartylphosphate intermediate. Disordered regions lie at residues 452–478 (MKND…IPLK) and 562–613 (MPAE…LKNA). Over residues 589–604 (FFSSKNDNSHITSTLN) the composition is skewed to polar residues. Lys-716 serves as a coordination point for ATP. Residues 975–994 (YLISSNIGEVASIFITALLG) traverse the membrane as a helical segment. The Extracellular segment spans residues 995-1000 (IPDSLA). A helical transmembrane segment spans residues 1001-1021 (PVQLLWVNLVTDGLPATALGF). At 1022–1042 (NPPEHDVMKCKPRHKNDNLIN) the chain is on the cytoplasmic side. A helical membrane pass occupies residues 1043-1067 (GLTLLRYIIIGTYVGIATVSIFVYW). At 1068 to 1118 (FLFYPDSDMHTLINFYQLSHYNQCKAWNNFRVNKVYDMSEDHCSYFSAGKI) the chain is on the extracellular side. Residues 1119–1140 (KASTLSLSVLVLIEMFNALNAL) form a helical membrane-spanning segment. Residues 1141-1151 (SEYNSLFEIPP) are Cytoplasmic-facing. The chain crosses the membrane as a helical span at residues 1152 to 1172 (WRNMYLVLATIGSLLLHVLIL). Over 1173 to 1185 (YIPPLARIFGVVP) the chain is Extracellular. The chain crosses the membrane as a helical span at residues 1186–1206 (LSAYDWFLVFLWSFPVIILDE). At 1207-1228 (IIKFYAKRKLKEEQRTKKIKID) the chain is on the cytoplasmic side.

The protein belongs to the cation transport ATPase (P-type) (TC 3.A.3) family.

Its subcellular location is the membrane. The catalysed reaction is Ca(2+)(in) + ATP + H2O = Ca(2+)(out) + ADP + phosphate + H(+). Its function is as follows. This magnesium-dependent enzyme catalyzes the hydrolysis of ATP coupled with the transport of the calcium. The protein is Calcium-transporting ATPase (ATP6) of Plasmodium falciparum (isolate K1 / Thailand).